The primary structure comprises 192 residues: uncharacterized protein (192 aa).

The protein belongs to the CAPAB/TerDEXZ family.

This is an uncharacterized protein from Bacillus subtilis (strain 168).